Reading from the N-terminus, the 184-residue chain is Gastrokine-2 (184 aa).

The N-terminal stretch at 1–20 is a signal peptide; the sequence is MKPLVAFLVVLSIFGIQSQA. A BRICHOS domain is found at 54–151; it reads HSGSCSSTTI…LCKHMPLYEG (98 aa). Cysteines 81 and 143 form a disulfide.

As to quaternary structure, heterodimer with TFF1; disulfide linked. Interacts with TFF2. In terms of tissue distribution, stomach foveolar epithelium and duodenal Brunner's glands.

Its subcellular location is the secreted. It is found in the golgi apparatus. This chain is Gastrokine-2 (Gkn2), found in Mus musculus (Mouse).